We begin with the raw amino-acid sequence, 83 residues long: uncharacterized protein (83 aa).

This is an uncharacterized protein from Archaeoglobus fulgidus (strain ATCC 49558 / DSM 4304 / JCM 9628 / NBRC 100126 / VC-16).